Reading from the N-terminus, the 970-residue chain is Type III restriction-modification enzyme EcoP15I Res subunit (970 aa).

Residues 75-540 form a helicase-like domain region; it reads AKSNIIDVSM…EVGRGLRLPV (466 aa). The AMP site is built by threonine 91, glycine 122, phenylalanine 126, and aspartate 226. The endonuclease domain stretch occupies residues 894 to 918; it reads TYSPDFAYVVKTAEGDYLNFIIETK.

This sequence belongs to the type III restriction-modification system Res protein family. A heterotetramer with stoichiometry Res(2)Mod(2). A heterotrimer with stoichiometry Res(1)Mod(2). Requires Mg(2+) as cofactor. The cofactor is S-adenosyl-L-methionine.

The enzyme catalyses Endonucleolytic cleavage of DNA to give specific double-stranded fragments with terminal 5'-phosphates.. In terms of biological role, a type III restriction enzyme that recognizes 2 inversely oriented double-stranded sequences 5'-CAGCAG-3' and cleaves DNA 25-27 base pairs downstream of one site. DNA restriction requires both the Res and Mod subunits. DNA topology affects its action; relaxed and negatively supercoiled DNA are digested but positively supercoiled DNA is not a good substrate. Interacts with DNA approximately one half-turn downstream of the recognition site. After binding to one recognition site undergoes random one-dimensional diffusion along DNA until it collides with a stationary enzyme bound to the second DNA site, which is when DNA cleavage occurs. The sequence is that of Type III restriction-modification enzyme EcoP15I Res subunit from Escherichia coli.